The following is a 522-amino-acid chain: Putative aldehyde dehydrogenase-like protein C21C3 (522 aa).

The Proton acceptor role is filled by Glu-239. Cys-273 serves as the catalytic Nucleophile.

It belongs to the aldehyde dehydrogenase family.

It localises to the cytoplasm. The protein resides in the nucleus. This is Putative aldehyde dehydrogenase-like protein C21C3 from Schizosaccharomyces pombe (strain 972 / ATCC 24843) (Fission yeast).